A 107-amino-acid polypeptide reads, in one-letter code: Pre-mRNA-splicing factor RDS3 (107 aa).

The protein belongs to the PHF5 family. Component of the spliceosome where it interacts with CUS1, HSH49, HSH155, IST3 and RSE1. Also interacts with YRA1.

Its subcellular location is the nucleus. In terms of biological role, required for pre-mRNA splicing. Involved in regulation of drug sensitivity and may play a role in multidrug resistance. The protein is Pre-mRNA-splicing factor RDS3 (RDS3) of Saccharomyces cerevisiae (strain ATCC 204508 / S288c) (Baker's yeast).